The chain runs to 442 residues: Trigger factor (442 aa).

Residues 162–247 enclose the PPIase FKBP-type domain; that stretch reads GDTVTIDYKG…IHEVKSKQLP (86 aa).

The protein belongs to the FKBP-type PPIase family. Tig subfamily.

The protein resides in the cytoplasm. The catalysed reaction is [protein]-peptidylproline (omega=180) = [protein]-peptidylproline (omega=0). Functionally, involved in protein export. Acts as a chaperone by maintaining the newly synthesized protein in an open conformation. Functions as a peptidyl-prolyl cis-trans isomerase. The sequence is that of Trigger factor from Lactobacillus acidophilus (strain ATCC 700396 / NCK56 / N2 / NCFM).